Here is a 204-residue protein sequence, read N- to C-terminus: High mobility group-T protein (204 aa).

DNA-binding regions (HMG box) lie at residues 8-78 (PRGK…RSYI) and 94-162 (PKRP…TAYR). Positions 162-204 (RNKGKVPVSMPAKAAAPAKDDDDDDDDDDDDEDDDDDDDEDDE) are disordered. Residues 181 to 204 (DDDDDDDDDDDDEDDDDDDDEDDE) show a composition bias toward acidic residues.

This sequence belongs to the HMGB family.

The protein localises to the nucleus. Its subcellular location is the chromosome. Functionally, binds preferentially single-stranded DNA and unwinds double-stranded DNA. This chain is High mobility group-T protein, found in Oncorhynchus mykiss (Rainbow trout).